The chain runs to 541 residues: Chaperonin GroEL 1 (541 aa).

ATP-binding positions include 29-32 (TLGP), 86-90 (DGTTT), Gly413, and Asp492.

The protein belongs to the chaperonin (HSP60) family. In terms of assembly, forms a cylinder of 14 subunits composed of two heptameric rings stacked back-to-back. Interacts with the co-chaperonin GroES.

It is found in the cytoplasm. It carries out the reaction ATP + H2O + a folded polypeptide = ADP + phosphate + an unfolded polypeptide.. Together with its co-chaperonin GroES, plays an essential role in assisting protein folding. The GroEL-GroES system forms a nano-cage that allows encapsulation of the non-native substrate proteins and provides a physical environment optimized to promote and accelerate protein folding. The sequence is that of Chaperonin GroEL 1 from Rhodococcus jostii (strain RHA1).